We begin with the raw amino-acid sequence, 365 residues long: Probable dual-specificity RNA methyltransferase RlmN (365 aa).

Glu108 serves as the catalytic Proton acceptor. Residues 114-347 (HNYGNSVCVT…VTIRREHGHD (234 aa)) enclose the Radical SAM core domain. Cys121 and Cys352 are disulfide-bonded. Cys128, Cys132, and Cys135 together coordinate [4Fe-4S] cluster. S-adenosyl-L-methionine-binding positions include 178–179 (GE), Ser210, 233–235 (SLH), and Asn309. Cys352 (S-methylcysteine intermediate) is an active-site residue.

It belongs to the radical SAM superfamily. RlmN family. [4Fe-4S] cluster is required as a cofactor.

Its subcellular location is the cytoplasm. It catalyses the reaction adenosine(2503) in 23S rRNA + 2 reduced [2Fe-2S]-[ferredoxin] + 2 S-adenosyl-L-methionine = 2-methyladenosine(2503) in 23S rRNA + 5'-deoxyadenosine + L-methionine + 2 oxidized [2Fe-2S]-[ferredoxin] + S-adenosyl-L-homocysteine. The catalysed reaction is adenosine(37) in tRNA + 2 reduced [2Fe-2S]-[ferredoxin] + 2 S-adenosyl-L-methionine = 2-methyladenosine(37) in tRNA + 5'-deoxyadenosine + L-methionine + 2 oxidized [2Fe-2S]-[ferredoxin] + S-adenosyl-L-homocysteine. Its function is as follows. Specifically methylates position 2 of adenine 2503 in 23S rRNA and position 2 of adenine 37 in tRNAs. This is Probable dual-specificity RNA methyltransferase RlmN from Geobacillus kaustophilus (strain HTA426).